A 245-amino-acid chain; its full sequence is MTSATKTNNSGSISSPIVVALDYANKDAALAFADQVSPQDCRLKVGKEMFTLYGPELIRDLHQRGFDVFLDLKFHDIPNTTARAVAAAAELGVWMVNVHASGGARMMSAAKEALLPYGAQAPLLIAVTVLTSMDSEDLRDIGITISPAEQAERLAKLTWDCGLDGVVCSAHEAVRLKQVCGEDFSLVTPGIRPQGSEAGDQRRIMTPEQAVAVGVDYMVIGRPITQSPDPEKTLREILASLTKVA.

Residues Asp-22, Lys-44, 71-80 (DLKFHDIPNT), Thr-131, Arg-192, Gln-201, Gly-221, and Arg-222 each bind substrate. The active-site Proton donor is Lys-73.

Belongs to the OMP decarboxylase family. Type 1 subfamily. Homodimer.

The enzyme catalyses orotidine 5'-phosphate + H(+) = UMP + CO2. It participates in pyrimidine metabolism; UMP biosynthesis via de novo pathway; UMP from orotate: step 2/2. Catalyzes the decarboxylation of orotidine 5'-monophosphate (OMP) to uridine 5'-monophosphate (UMP). The chain is Orotidine 5'-phosphate decarboxylase from Yersinia pseudotuberculosis serotype O:1b (strain IP 31758).